Reading from the N-terminus, the 187-residue chain is Putative protein 2 (187 aa).

The next 2 membrane-spanning stretches (helical) occupy residues 10 to 27 and 99 to 121; these read MLAAFALMTLFLLDNVGV and VTIIIFLSVVGALLLYMLFLLLV.

It belongs to the TMEM9 family.

The protein resides in the membrane. The chain is Putative protein 2 from Takifugu rubripes (Japanese pufferfish).